Here is a 123-residue protein sequence, read N- to C-terminus: Pre-B lymphocyte protein 3 (123 aa).

Residues 1–20 form the signal peptide; it reads MACRCLSFLLMGTFLSVSQT. The 103-residue stretch at 21–123 folds into the Ig-like domain; sequence VLAQLDALLV…YCSVGYGFSP (103 aa). An intrachain disulfide couples Cys40 to Cys115.

The protein belongs to the immunoglobulin superfamily. Expressed in B-cell precursors. Expressed in fetal liver, bone marrow, spleen and lymph node.

Its function is as follows. Associates with the Ig-mu chain to form a molecular complex that is expressed on the surface of pre-B-cells. In Homo sapiens (Human), this protein is Pre-B lymphocyte protein 3 (VPREB3).